A 229-amino-acid chain; its full sequence is Ribulose-phosphate 3-epimerase (229 aa).

A substrate-binding site is contributed by Ser-12. A divalent metal cation-binding residues include His-37, Asp-39, and His-70. Asp-39 (proton acceptor) is an active-site residue. Substrate contacts are provided by residues His-70, 146-149 (GFTG), 181-183 (DGG), and 203-204 (AS). Asp-181 serves as a coordination point for a divalent metal cation. Asp-181 acts as the Proton donor in catalysis.

The protein belongs to the ribulose-phosphate 3-epimerase family. A divalent metal cation serves as cofactor.

It catalyses the reaction D-ribulose 5-phosphate = D-xylulose 5-phosphate. Its pathway is carbohydrate degradation. Catalyzes the reversible epimerization of D-ribulose 5-phosphate to D-xylulose 5-phosphate. The polypeptide is Ribulose-phosphate 3-epimerase (Chlamydia pneumoniae (Chlamydophila pneumoniae)).